The following is a 450-amino-acid chain: Cyclin-A2-3 (450 aa).

Disordered stretches follow at residues 18-53 (ALRASEVTSTTQNQQRVNTKRPALEDTRATGPNKRK) and 75-94 (NSKQIKKGRGHGLASTSQLA). Polar residues predominate over residues 23 to 34 (EVTSTTQNQQRV).

It belongs to the cyclin family. Cyclin AB subfamily. In terms of assembly, interacts with CDKA-1. Interacts with SAMBA.

The protein localises to the nucleus. Negatively regulates endocycles and acts as a regulator of ploidy levels in endoreduplication. Promotes divisions in the guard cells (GCs) after the guard mother cells (GMC) symmetric division. The sequence is that of Cyclin-A2-3 (CYCA2-3) from Arabidopsis thaliana (Mouse-ear cress).